A 33-amino-acid chain; its full sequence is Vejocalcin (33 aa).

3 cysteine pairs are disulfide-bonded: cysteine 3–cysteine 17, cysteine 10–cysteine 21, and cysteine 16–cysteine 32. The tract at residues 23–24 (RR) is essential for stimulation of [3H]ryanodine binding to RYR1.

In terms of tissue distribution, expressed by the venom gland.

It localises to the secreted. Its function is as follows. This toxin stabilizes ryanodine receptor 1 (RyR1) opening in a long-lasting subconductance state (60% of the full conductance state). Furthermore, it triggers calcium release from sarcoplasmic vesicles (31 nM are enough to induce a sharp release, and 65% of the total calcium is released after toxin (100 nM) addition) probably by acting as a cell-penetrating peptide (CPP). In addition, it has been shown to dose-dependently stimulate ryanodine binding to RyR1 (EC(50)=3.7 nM). It also augments the bell-shaped calcium-[3H]ryanodine binding curve that is maximal at about 10 uM calcium concentration. It binds a different site as ryanodine. It acts synergistically with caffeine. In vivo, intracerebroventricular injection into mice induces neurotoxic symptoms, followed by death. The protein is Vejocalcin of Vaejovis mexicanus (Mexican scorpion).